The sequence spans 428 residues: Enolase (428 aa).

Q163 contacts (2R)-2-phosphoglycerate. The active-site Proton donor is E205. Mg(2+) is bound by residues D242, E286, and D313. Residues K338, R367, S368, and K389 each contribute to the (2R)-2-phosphoglycerate site. The active-site Proton acceptor is the K338.

It belongs to the enolase family. It depends on Mg(2+) as a cofactor.

It is found in the cytoplasm. The protein localises to the secreted. The protein resides in the cell surface. The catalysed reaction is (2R)-2-phosphoglycerate = phosphoenolpyruvate + H2O. It participates in carbohydrate degradation; glycolysis; pyruvate from D-glyceraldehyde 3-phosphate: step 4/5. Catalyzes the reversible conversion of 2-phosphoglycerate (2-PG) into phosphoenolpyruvate (PEP). It is essential for the degradation of carbohydrates via glycolysis. This Bordetella avium (strain 197N) protein is Enolase.